The primary structure comprises 248 residues: MRSSGRKKEQIRPVKITRNFTKYAEGSVLIEVGDTKVLCTASIEEKVPPFLKGSGEGWITAEYNMIPRSTQSRKQRDINKLKIDGRTMEIQRLIGRALRSAVDMKALGEKTIWIDCDVLQADGGTRTTSITGSFVALVDAVNKLHQKKPFNVYPIRHFVSAVSIGIVGEEKVLDLCYEEDHVAKVDMNVVMIEEGEFIEIQGTGEIGPFSRKELDELLNLAEKGAKQMIQAQKNALKTDSLWIGTGRE.

Residues Arg86 and 124 to 126 each bind phosphate; that span reads GTR.

It belongs to the RNase PH family. As to quaternary structure, homohexameric ring arranged as a trimer of dimers.

It carries out the reaction tRNA(n+1) + phosphate = tRNA(n) + a ribonucleoside 5'-diphosphate. Its function is as follows. Phosphorolytic 3'-5' exoribonuclease that plays an important role in tRNA 3'-end maturation. Removes nucleotide residues following the 3'-CCA terminus of tRNAs; can also add nucleotides to the ends of RNA molecules by using nucleoside diphosphates as substrates, but this may not be physiologically important. Probably plays a role in initiation of 16S rRNA degradation (leading to ribosome degradation) during starvation. In Clostridium perfringens (strain SM101 / Type A), this protein is Ribonuclease PH.